Reading from the N-terminus, the 380-residue chain is Cytochrome b (380 aa).

The next 4 helical transmembrane spans lie at 34 to 54 (YGSL…FLAM), 78 to 99 (WLMR…YLHI), 114 to 134 (WNIG…GYVL), and 179 to 199 (FFTF…LHLL). The heme b site is built by H84 and H98. Heme b is bound by residues H183 and H197. H202 lines the a ubiquinone pocket. 4 consecutive transmembrane segments (helical) span residues 227–247 (YKDT…STTN), 289–309 (LGGV…PSLH), 321–341 (LSQL…WIGG), and 348–368 (FILI…VLLP).

This sequence belongs to the cytochrome b family. As to quaternary structure, the cytochrome bc1 complex contains 3 respiratory subunits (MT-CYB, CYC1 and UQCRFS1), 2 core proteins (UQCRC1 and UQCRC2) and probably 6 low-molecular weight proteins. The cofactor is heme b.

The protein resides in the mitochondrion inner membrane. Component of the ubiquinol-cytochrome c reductase complex (complex III or cytochrome b-c1 complex) that is part of the mitochondrial respiratory chain. The b-c1 complex mediates electron transfer from ubiquinol to cytochrome c. Contributes to the generation of a proton gradient across the mitochondrial membrane that is then used for ATP synthesis. The sequence is that of Cytochrome b (mt-cyb) from Typhlonectes natans (Rubber eel).